We begin with the raw amino-acid sequence, 458 residues long: tRNA modification GTPase MnmE (458 aa).

Arginine 22, glutamate 84, and arginine 123 together coordinate (6S)-5-formyl-5,6,7,8-tetrahydrofolate. The 160-residue stretch at 220-379 folds into the TrmE-type G domain; it reads GIATAIIGRP…LEKAIADLFF (160 aa). Asparagine 230 lines the K(+) pocket. GTP contacts are provided by residues 230–235, 249–255, and 274–277; these read NVGKSS, TDIAGTT, and DTAG. Serine 234 lines the Mg(2+) pocket. 3 residues coordinate K(+): threonine 249, isoleucine 251, and threonine 254. Residue threonine 255 participates in Mg(2+) binding. Lysine 458 contributes to the (6S)-5-formyl-5,6,7,8-tetrahydrofolate binding site.

This sequence belongs to the TRAFAC class TrmE-Era-EngA-EngB-Septin-like GTPase superfamily. TrmE GTPase family. Homodimer. Heterotetramer of two MnmE and two MnmG subunits. Requires K(+) as cofactor.

The protein resides in the cytoplasm. Functionally, exhibits a very high intrinsic GTPase hydrolysis rate. Involved in the addition of a carboxymethylaminomethyl (cmnm) group at the wobble position (U34) of certain tRNAs, forming tRNA-cmnm(5)s(2)U34. The protein is tRNA modification GTPase MnmE of Bacillus cereus (strain ATCC 14579 / DSM 31 / CCUG 7414 / JCM 2152 / NBRC 15305 / NCIMB 9373 / NCTC 2599 / NRRL B-3711).